Reading from the N-terminus, the 491-residue chain is Cytochrome P450 2F3 (491 aa).

Residue C436 participates in heme binding.

The protein belongs to the cytochrome P450 family. The cofactor is heme. In terms of tissue distribution, lung specific.

It is found in the endoplasmic reticulum membrane. It localises to the microsome membrane. It carries out the reaction an organic molecule + reduced [NADPH--hemoprotein reductase] + O2 = an alcohol + oxidized [NADPH--hemoprotein reductase] + H2O + H(+). Functionally, bioactivates 3-methylindole (3MI) by dehydrogenation to the putative electrophile 3-methylene-indolenine. Stereoselectively catalyzes the formation of the 1R,2S-oxide from naphthalene. Lack activity with other common P450 substrates including 7-ethoxycoumarin. The chain is Cytochrome P450 2F3 (CYP2F3) from Capra hircus (Goat).